We begin with the raw amino-acid sequence, 614 residues long: Zinc finger and SCAN domain-containing protein 2 (614 aa).

3 disordered regions span residues 1–25 (MAAEVPAVSTPLSPLVQVPQEEDEQ), 42–73 (AVLQEDGPESEPFPQSAGKGSPQEEDAAEGPQ), and 162–200 (NISGGEGGQQSDGDSDFERDCGSGGAQGHAPGEDPRVVP). Residues 69–127 (AEGPQGALVRFRELCRRWLRPEVHTKEQMLTVLPREIQAWLQEHRPESSEEAVALVEDL) enclose the SCAN box domain. 14 C2H2-type zinc fingers span residues 222–244 (YECPQCGKTFSRKSHLITHERTH), 250–272 (YKCDECGKSFSDGSNFSRHQTTH), 278–300 (YKCRDCGKSFSRSANLITHQRIH), 306–328 (FQCAECGKSFSRSPNLIAHQRTH), 334–356 (YSCPECGKSFGNRSSLNTHQGIH), 362–384 (YACKECGESFSYNSNLIRHQRIH), 390–412 (YKCTECGQKFSQSSALITHRRTH), 418–440 (YQCGECGKNFSRSSNLATHRRTH), 446–468 (YKCGLCGKSFSQSSSLIAHQGTH), 474–496 (YECLTCGESFSWSSNLIKHQRTH), 502–524 (YRCGDCGKGFSQRSQLVVHQRTH), 530–552 (YKCLMCGKSFSRGSILVMHQRAH), 558–580 (YRCPECGKGFSWNSVLIIHQRIH), and 586–608 (YRCPECGKGFSNSSNFITHQRTH).

Belongs to the krueppel C2H2-type zinc-finger protein family. In the adult, predominantly found in spermatids. Also present in the embryo.

The protein localises to the nucleus. In terms of biological role, may be involved in transcriptional regulation during the post-meiotic stages of spermatogenesis. This Mus musculus (Mouse) protein is Zinc finger and SCAN domain-containing protein 2 (Zscan2).